A 463-amino-acid chain; its full sequence is Chitobiosyldiphosphodolichol beta-mannosyltransferase (463 aa).

Residues 1-3 (MKA) lie on the Lumenal side of the membrane. Residues 4 to 24 (WHWSVTLVVIYLAIPVILYLL) traverse the membrane as a helical segment. At 25-105 (TRKDDRKPLS…PLILNTRKLP (81 aa)) the chain is on the cytoplasmic side. Residues 106-126 (FVVFGILKVIRQHWLLISLLY) constitute an intramembrane region (helical). The Lumenal segment spans residues 127–463 (KLRGADYLLV…FSSSSSDDDH (337 aa)).

It belongs to the glycosyltransferase group 1 family.

It localises to the endoplasmic reticulum membrane. The enzyme catalyses an N,N'-diacetylchitobiosyl-diphospho-di-trans,poly-cis-dolichol + GDP-alpha-D-mannose = a beta-D-Man-(1-&gt;4)-beta-D-GlcNAc-(1-&gt;4)-alpha-D-GlcNAc-diphospho-di-trans,poly-cis-dolichol + GDP + H(+). It functions in the pathway protein modification; protein glycosylation. Functionally, participates in the formation of the lipid-linked precursor oligosaccharide for N-glycosylation. Involved in assembling the dolichol-pyrophosphate-GlcNAc(2)-Man(5) intermediate on the cytoplasmic surface of the ER. The polypeptide is Chitobiosyldiphosphodolichol beta-mannosyltransferase (ALG1) (Yarrowia lipolytica (strain CLIB 122 / E 150) (Yeast)).